The chain runs to 393 residues: MSQQNIPFTNNVQTADFSVQHSKSEKVNLMNMTRQEMREFLANLGEKPFRADQLMKWIYHFGEDEFDNMSNINKVLREKLKKVAEIKAPAIAIEQRSSDGTIKWAMQVGNQQIETVYIPEGDRATLCVSSQVGCALECKFCSTAQQGFNRNLTVSEIIGQVWRASKIIGNFGITGVRPITNVVMMGMGEPLLNMNNVIPAMQIMLDDFAYGLSKRRVTLSTAGVVPALDLMREKIDVALAISLHAPNNELRNEIMPINKKYNIKMLMDSVAKYLAVSNANHGKVTIEYVLLDHVNDGTEHAHQLAEVLKNTPCKINLIPWNPFPEAPYGKSSNSRVDRFQKTLMEYGFTVIVRKTRGDDIDAACGQLAGEVIDRTKRTLEKRKFGKSIMVNNH.

Glu-114 (proton acceptor) is an active-site residue. One can recognise a Radical SAM core domain in the interval 120 to 359; that stretch reads EGDRATLCVS…VIVRKTRGDD (240 aa). Cys-127 and Cys-364 are disulfide-bonded. [4Fe-4S] cluster contacts are provided by Cys-134, Cys-138, and Cys-141. S-adenosyl-L-methionine is bound by residues 188–189, Ser-220, 242–244, and Asn-321; these read GE and SLH. The active-site S-methylcysteine intermediate is the Cys-364.

It belongs to the radical SAM superfamily. RlmN family. Requires [4Fe-4S] cluster as cofactor.

The protein resides in the cytoplasm. It catalyses the reaction adenosine(2503) in 23S rRNA + 2 reduced [2Fe-2S]-[ferredoxin] + 2 S-adenosyl-L-methionine = 2-methyladenosine(2503) in 23S rRNA + 5'-deoxyadenosine + L-methionine + 2 oxidized [2Fe-2S]-[ferredoxin] + S-adenosyl-L-homocysteine. The enzyme catalyses adenosine(37) in tRNA + 2 reduced [2Fe-2S]-[ferredoxin] + 2 S-adenosyl-L-methionine = 2-methyladenosine(37) in tRNA + 5'-deoxyadenosine + L-methionine + 2 oxidized [2Fe-2S]-[ferredoxin] + S-adenosyl-L-homocysteine. Its function is as follows. Specifically methylates position 2 of adenine 2503 in 23S rRNA and position 2 of adenine 37 in tRNAs. m2A2503 modification seems to play a crucial role in the proofreading step occurring at the peptidyl transferase center and thus would serve to optimize ribosomal fidelity. The polypeptide is Dual-specificity RNA methyltransferase RlmN (Haemophilus ducreyi (strain 35000HP / ATCC 700724)).